A 152-amino-acid chain; its full sequence is MDSKVVIYTDGACSGNPGPGGWGALLHFNDTSKKIFGYELVTTNNRMEMTAALEALRILKKSSVVEIYTDSKYLQHGITVWIHNWIKNNWCKSNNAPVKNADLWQKLYSELSKHTIMWKWVKGHASNSGNIAADKLAVQGRETAMEILKCLG.

The RNase H type-1 domain occupies 1-142 (MDSKVVIYTD…ADKLAVQGRE (142 aa)). Residues Asp10, Glu48, Asp70, and Asp134 each coordinate Mg(2+).

This sequence belongs to the RNase H family. As to quaternary structure, monomer. Requires Mg(2+) as cofactor.

Its subcellular location is the cytoplasm. The catalysed reaction is Endonucleolytic cleavage to 5'-phosphomonoester.. In terms of biological role, endonuclease that specifically degrades the RNA of RNA-DNA hybrids. The polypeptide is Ribonuclease HI (rnhA) (Rickettsia prowazekii (strain Madrid E)).